The chain runs to 207 residues: Small ribosomal subunit protein uS4 (207 aa).

One can recognise an S4 RNA-binding domain in the interval 96 to 159; that stretch reads RRLDNVVYRL…RASTFIADNI (64 aa).

Belongs to the universal ribosomal protein uS4 family. In terms of assembly, part of the 30S ribosomal subunit. Contacts protein S5. The interaction surface between S4 and S5 is involved in control of translational fidelity.

Its function is as follows. One of the primary rRNA binding proteins, it binds directly to 16S rRNA where it nucleates assembly of the body of the 30S subunit. In terms of biological role, with S5 and S12 plays an important role in translational accuracy. The chain is Small ribosomal subunit protein uS4 from Leptospira borgpetersenii serovar Hardjo-bovis (strain JB197).